Here is a 364-residue protein sequence, read N- to C-terminus: GTPase Obg (364 aa).

The Obg domain occupies 1–159; the sequence is MKFVDEAYID…KSLKLELKVL (159 aa). Residues 160–334 form the OBG-type G domain; the sequence is ADVGLLGMPN…LVKTIYQHVK (175 aa). GTP is bound by residues 166 to 173, 191 to 195, 213 to 216, 284 to 287, and 315 to 317; these read GMPNAGKS, FTTLH, DLPG, NKLD, and SAL. Mg(2+)-binding residues include S173 and T193. The interval 337–364 is disordered; sequence QKSEQPEEEVDPRFIELPPEPAKPASSD.

The protein belongs to the TRAFAC class OBG-HflX-like GTPase superfamily. OBG GTPase family. As to quaternary structure, monomer. The cofactor is Mg(2+).

The protein resides in the cytoplasm. Its function is as follows. An essential GTPase which binds GTP, GDP and possibly (p)ppGpp with moderate affinity, with high nucleotide exchange rates and a fairly low GTP hydrolysis rate. Plays a role in control of the cell cycle, stress response, ribosome biogenesis and in those bacteria that undergo differentiation, in morphogenesis control. The polypeptide is GTPase Obg (Polaromonas naphthalenivorans (strain CJ2)).